An 810-amino-acid polypeptide reads, in one-letter code: MNTPQISLYEPGTILTVGSHHAKIIKYLTSGGFAQVYTAEISPPDPYSNANIACLKRVIVPHKQGLNTLRAEVDAMKLLRNNKHVVSYIDSHAARSVNGIAYEVFVLMEFCERGGLIDFMNTRLQNRLQESEILEIMSQTVQGITAMHALQPPLIHRDIKIENVLISHDGLYKVCDFGSVSGVIRPPRNTQEFNYVQHDILTNTTAQYRSPEMIDLYRGLPIDEKSDIWALGVFLYKICYYTTPFEKSGEAGILHARYQYPSFPQYSDRLKNLIRLMLMEAPSQRPNICQVLEEVSRLQNKPCPIRNFYLLRAMNQNANTQLAGEPSSTTYVPTQKFIPVQSLQSINQPPNMMPVTHVSTTPNLGTFPISINDNNKTEVTAHAGLQVGSHSNLTSPLMKTKSVPLSDEFASLYYKELHPFQKSQTFKSVESFQSPQRKSMPPLSLTPVNNDIFDRVSAINRPNNYVDSETQTIDNMAVPNLKLSPTITSKSLSSTKEIAAPDNINGSKIVRSLSSKLKKVITGESRGNSPIKSRQNTGDSIRSAFGKLRHGFTGNSVNNSRSASFDNNNVNGNGNNTNRRLVSSSTSSFPKFNSDTKRKEESDKNQRLEKRRSMPPSILSDFDQHERNNSRTGSRDYYRSHSPVKKTQASAKTTSKPTLIPDNGNVNINQEKKESIQRRVHNLLKSSDDPVTYKSASGYGKYTDIGTETSNRHSSVRITPITEEKFKKTLKDGVLDIKTKSNGKDKSRPPRPPPKPLHLRTEIQKIRNFSRLQSKKLPIERISSEATETIVDVNVDDLEADFRKRFPSKV.

The 277-residue stretch at 22–298 (AKIIKYLTSG…CQVLEEVSRL (277 aa)) folds into the Protein kinase domain. Residues 28-36 (LTSGGFAQV) and K56 each bind ATP. The Proton acceptor role is filled by D158. Phosphoserine occurs at positions 402, 428, and 484. Disordered stretches follow at residues 552–668 (FTGN…NVNI) and 733–761 (GVLD…HLRT). Residue T553 is modified to Phosphothreonine. Residues 553–566 (TGNSVNNSRSASFD) show a composition bias toward polar residues. S556 carries the post-translational modification Phosphoserine. Positions 567-588 (NNNVNGNGNNTNRRLVSSSTSS) are enriched in low complexity. Basic and acidic residues-rich tracts occupy residues 594–612 (SDTK…EKRR) and 622–639 (FDQH…DYYR). Over residues 645–658 (KKTQASAKTTSKPT) the composition is skewed to low complexity. Positions 733-748 (GVLDIKTKSNGKDKSR) are enriched in basic and acidic residues. Positions 743 to 756 (GKDKSRPPRPPPKP) are interaction with SH3 domain of ABP1.

The protein belongs to the protein kinase superfamily. Ser/Thr protein kinase family. In terms of assembly, interacts with ABP1, which is required for proper actin patch localization.

The protein resides in the cytoplasm. The protein localises to the cytoskeleton. Its subcellular location is the actin patch. It catalyses the reaction L-seryl-[protein] + ATP = O-phospho-L-seryl-[protein] + ADP + H(+). It carries out the reaction L-threonyl-[protein] + ATP = O-phospho-L-threonyl-[protein] + ADP + H(+). Protein kinase involved in the regulation of actin cytoskeleton organization and endocytosis. Phosphorylates PAN1 which disrupts the interaction between PAN1 and END3, and between PAN1 and SLA1. Phosphorylates SCD5. Preferentially, phosphorylates substrates on threonine residues in a [L/I/V/M]-x-x-[Q/N/T/S]-x-T-G motif. This is Actin-regulating kinase PRK1 (PRK1) from Saccharomyces cerevisiae (strain ATCC 204508 / S288c) (Baker's yeast).